A 263-amino-acid polypeptide reads, in one-letter code: Probable septum site-determining protein MinC (263 aa).

The interval 107-159 (LPPSGARERPLDIKDSAPRKPAEEPSPSAGEARPEPAKAEEKPAEPVSRPTKV) is disordered. Composition is skewed to basic and acidic residues over residues 112-129 (ARER…KPAE) and 138-150 (ARPE…EKPA).

This sequence belongs to the MinC family. In terms of assembly, interacts with MinD and FtsZ.

Functionally, cell division inhibitor that blocks the formation of polar Z ring septums. Rapidly oscillates between the poles of the cell to destabilize FtsZ filaments that have formed before they mature into polar Z rings. Prevents FtsZ polymerization. This chain is Probable septum site-determining protein MinC, found in Pseudomonas aeruginosa (strain LESB58).